Reading from the N-terminus, the 60-residue chain is Large ribosomal subunit protein uL30 (60 aa).

The protein belongs to the universal ribosomal protein uL30 family. In terms of assembly, part of the 50S ribosomal subunit.

This chain is Large ribosomal subunit protein uL30, found in Bacillus cereus (strain G9842).